The chain runs to 78 residues: Sec-independent protein translocase protein TatA (78 aa).

The chain crosses the membrane as a helical span at residues 1-21 (MGGISIWQLLIVALIVVLLFG). A disordered region spans residues 40–78 (KSAMSSEEEKKAIEDSASEKTAQTEEKKTESKDKDKEQV). Residues 46–78 (EEEKKAIEDSASEKTAQTEEKKTESKDKDKEQV) are compositionally biased toward basic and acidic residues.

It belongs to the TatA/E family. As to quaternary structure, the Tat system comprises two distinct complexes: a TatABC complex, containing multiple copies of TatA, TatB and TatC subunits, and a separate TatA complex, containing only TatA subunits. Substrates initially bind to the TatABC complex, which probably triggers association of the separate TatA complex to form the active translocon.

Its subcellular location is the cell inner membrane. In terms of biological role, part of the twin-arginine translocation (Tat) system that transports large folded proteins containing a characteristic twin-arginine motif in their signal peptide across membranes. TatA could form the protein-conducting channel of the Tat system. The sequence is that of Sec-independent protein translocase protein TatA from Shewanella sediminis (strain HAW-EB3).